The following is a 131-amino-acid chain: Large ribosomal subunit protein bL19 (131 aa).

It belongs to the bacterial ribosomal protein bL19 family.

This protein is located at the 30S-50S ribosomal subunit interface and may play a role in the structure and function of the aminoacyl-tRNA binding site. This Synechococcus sp. (strain CC9902) protein is Large ribosomal subunit protein bL19.